The following is a 478-amino-acid chain: Elongation factor Tu, chloroplastic (478 aa).

A compositionally biased stretch (low complexity) spans 1–29; sequence MASISAATATSSTKLVSSNSTNPLLPSST. Residues 1 to 31 form a disordered region; sequence MASISAATATSSTKLVSSNSTNPLLPSSTKP. Residues 1-69 constitute a chloroplast transit peptide; that stretch reads MASISAATAT…THRHRRFTVR (69 aa). Residues 79–283 form the tr-type G domain; the sequence is KPHVNIGTIG…AVDSYIPIPV (205 aa). The segment at 88 to 95 is G1; that stretch reads GHVDHGKT. 88-95 lines the GTP pocket; sequence GHVDHGKT. The segment at 129–133 is G2; sequence GITIN. A G3 region spans residues 150 to 153; sequence DCPG. GTP contacts are provided by residues 150–154 and 205–208; these read DCPGH and NKQD. Positions 205 to 208 are G4; the sequence is NKQD. The segment at 243–245 is G5; the sequence is SAL.

Belongs to the TRAFAC class translation factor GTPase superfamily. Classic translation factor GTPase family. EF-Tu/EF-1A subfamily.

It is found in the plastid. The protein localises to the chloroplast. In terms of biological role, this protein promotes the GTP-dependent binding of aminoacyl-tRNA to the A-site of ribosomes during protein biosynthesis. In Nicotiana tabacum (Common tobacco), this protein is Elongation factor Tu, chloroplastic (TUFA).